Here is a 98-residue protein sequence, read N- to C-terminus: NADH-ubiquinone oxidoreductase chain 4L (98 aa).

The next 3 membrane-spanning stretches (helical) occupy residues 1–21 (MTLV…GLLM), 26–46 (LMSA…LATI), and 59–79 (MPII…ALLV).

The protein belongs to the complex I subunit 4L family. Core subunit of respiratory chain NADH dehydrogenase (Complex I) which is composed of 45 different subunits.

It localises to the mitochondrion inner membrane. The catalysed reaction is a ubiquinone + NADH + 5 H(+)(in) = a ubiquinol + NAD(+) + 4 H(+)(out). Functionally, core subunit of the mitochondrial membrane respiratory chain NADH dehydrogenase (Complex I) which catalyzes electron transfer from NADH through the respiratory chain, using ubiquinone as an electron acceptor. Part of the enzyme membrane arm which is embedded in the lipid bilayer and involved in proton translocation. The chain is NADH-ubiquinone oxidoreductase chain 4L (MT-ND4L) from Pontoporia blainvillei (Franciscana).